The following is a 135-amino-acid chain: Protein PsiE homolog (135 aa).

4 consecutive transmembrane segments (helical) span residues 20–40, 54–74, 82–102, and 107–127; these read VGLL…TIHL, YLLI…ALIV, HFPL…LIIV, and PIDT…LYLA.

The protein belongs to the PsiE family.

The protein localises to the cell inner membrane. This Serratia proteamaculans (strain 568) protein is Protein PsiE homolog.